We begin with the raw amino-acid sequence, 170 residues long: Urease accessory protein UreE (170 aa).

Belongs to the UreE family.

Its subcellular location is the cytoplasm. In terms of biological role, involved in urease metallocenter assembly. Binds nickel. Probably functions as a nickel donor during metallocenter assembly. In Helicobacter pylori (strain P12), this protein is Urease accessory protein UreE.